Consider the following 417-residue polypeptide: Probable glucuronosyltransferase GUT1 (417 aa).

The Cytoplasmic portion of the chain corresponds to 1–15 (MGTRRRSARARARPP). Residues 16–36 (LAMPLAVLLLFACSSGVAAAA) form a helical; Signal-anchor for type II membrane protein membrane-spanning segment. At 37-417 (AQGIERIKDD…EGTREDLKPW (381 aa)) the chain is on the lumenal side. N-linked (GlcNAc...) asparagine glycosylation is found at N144 and N405.

This sequence belongs to the glycosyltransferase 47 family.

It is found in the golgi apparatus membrane. In terms of biological role, involved in the synthesis of glucuronoxylan hemicellulose in secondary cell walls. The polypeptide is Probable glucuronosyltransferase GUT1 (GUT1) (Oryza sativa subsp. japonica (Rice)).